A 255-amino-acid chain; its full sequence is Type III pantothenate kinase (255 aa).

Position 6–13 (6–13 (DIGNTTSE)) interacts with ATP. Substrate is bound by residues Tyr-100 and 107 to 110 (GIDR). Asp-109 functions as the Proton acceptor in the catalytic mechanism. Asp-129 contacts K(+). An ATP-binding site is contributed by Thr-132. Substrate is bound at residue Thr-184.

It belongs to the type III pantothenate kinase family. In terms of assembly, homodimer. The cofactor is NH4(+). K(+) serves as cofactor.

It localises to the cytoplasm. It carries out the reaction (R)-pantothenate + ATP = (R)-4'-phosphopantothenate + ADP + H(+). Its pathway is cofactor biosynthesis; coenzyme A biosynthesis; CoA from (R)-pantothenate: step 1/5. In terms of biological role, catalyzes the phosphorylation of pantothenate (Pan), the first step in CoA biosynthesis. This chain is Type III pantothenate kinase, found in Persephonella marina (strain DSM 14350 / EX-H1).